Here is an 83-residue protein sequence, read N- to C-terminus: Cell division protein ZapB (83 aa).

The stretch at 7–80 (EMLEKLEAKV…RVRTLLGKMD (74 aa)) forms a coiled coil.

Belongs to the ZapB family. In terms of assembly, homodimer. The ends of the coiled-coil dimer bind to each other, forming polymers. Interacts with FtsZ.

The protein localises to the cytoplasm. Non-essential, abundant cell division factor that is required for proper Z-ring formation. It is recruited early to the divisome by direct interaction with FtsZ, stimulating Z-ring assembly and thereby promoting cell division earlier in the cell cycle. Its recruitment to the Z-ring requires functional FtsA or ZipA. This is Cell division protein ZapB from Photobacterium profundum (strain SS9).